Here is a 319-residue protein sequence, read N- to C-terminus: MINTNNYRIIAKRVISSATSALETLSNNIPSDFNRIIEFLLSFKGRIILTGIGKSGYIARKIAASFSSTGMPSFYLHPAEASHGDLGMITRNDLVMMLSNSGETKELFNIIEYCNNSSIKIAAMTMNKNSTLAKRSDFLLKIPECQEASLIGTPTISSLIMLSLGDAIMTVIHEERGFTRDDFKIYHPGGTIGANLTKIKNIMRSGDEIPLVYEDTSFTETIIIMNKKRLGCTLVTDKEQNLIGIITDGDLRRNIHDQIHLKTASSIMTKNPHYISSEIFAQEALNLMKAKNITNIPIVDDNIIIGIIHIHDLLSMGVS.

An SIS domain is found at 36–178; sequence IIEFLLSFKG…MTVIHEERGF (143 aa). Residue 51 to 56 participates in ATP binding; it reads GIGKSG. 2 CBS domains span residues 203 to 263 and 268 to 319; these read MRSG…HLKT and MTKN…MGVS.

It belongs to the SIS family. GutQ/KpsF subfamily.

This is an uncharacterized protein from Rickettsia prowazekii (strain Madrid E).